Consider the following 132-residue polypeptide: Small ribosomal subunit protein uS9 (132 aa).

This sequence belongs to the universal ribosomal protein uS9 family.

In Mesomycoplasma hyopneumoniae (strain 232) (Mycoplasma hyopneumoniae), this protein is Small ribosomal subunit protein uS9.